The following is a 211-amino-acid chain: Uracil phosphoribosyltransferase (211 aa).

Residues Arg-79, Arg-104, and 131 to 139 contribute to the 5-phospho-alpha-D-ribose 1-diphosphate site; that span reads DPMLATGGS. Residues Ile-196 and 201–203 contribute to the uracil site; that span reads GDA. Asp-202 provides a ligand contact to 5-phospho-alpha-D-ribose 1-diphosphate.

It belongs to the UPRTase family. Mg(2+) serves as cofactor.

The enzyme catalyses UMP + diphosphate = 5-phospho-alpha-D-ribose 1-diphosphate + uracil. The protein operates within pyrimidine metabolism; UMP biosynthesis via salvage pathway; UMP from uracil: step 1/1. Allosterically activated by GTP. Its function is as follows. Catalyzes the conversion of uracil and 5-phospho-alpha-D-ribose 1-diphosphate (PRPP) to UMP and diphosphate. This chain is Uracil phosphoribosyltransferase, found in Limosilactobacillus reuteri (strain DSM 20016) (Lactobacillus reuteri).